Reading from the N-terminus, the 356-residue chain is Methionine import ATP-binding protein MetN (356 aa).

Residues 7 to 250 (IKLDNIDVTF…PRESLTQDFI (244 aa)) enclose the ABC transporter domain. 43-50 (GYSGAGKS) contacts ATP.

The protein belongs to the ABC transporter superfamily. Methionine importer (TC 3.A.1.24) family. In terms of assembly, the complex is composed of two ATP-binding proteins (MetN), two transmembrane proteins (MetI) and a solute-binding protein (MetQ).

Its subcellular location is the cell membrane. The enzyme catalyses L-methionine(out) + ATP + H2O = L-methionine(in) + ADP + phosphate + H(+). It carries out the reaction D-methionine(out) + ATP + H2O = D-methionine(in) + ADP + phosphate + H(+). Its function is as follows. Part of the ABC transporter complex MetNIQ involved in methionine import. Responsible for energy coupling to the transport system. The sequence is that of Methionine import ATP-binding protein MetN from Streptococcus agalactiae serotype Ia (strain ATCC 27591 / A909 / CDC SS700).